The sequence spans 321 residues: tRNA-dihydrouridine synthase B (321 aa).

Residues 16 to 18 and Q70 each bind FMN; that span reads PMA. C100 (proton donor) is an active-site residue. FMN contacts are provided by residues K139, 200-202, and 224-225; these read NGD and GR.

This sequence belongs to the Dus family. DusB subfamily. Requires FMN as cofactor.

It catalyses the reaction a 5,6-dihydrouridine in tRNA + NAD(+) = a uridine in tRNA + NADH + H(+). It carries out the reaction a 5,6-dihydrouridine in tRNA + NADP(+) = a uridine in tRNA + NADPH + H(+). Its function is as follows. Catalyzes the synthesis of 5,6-dihydrouridine (D), a modified base found in the D-loop of most tRNAs, via the reduction of the C5-C6 double bond in target uridines. This chain is tRNA-dihydrouridine synthase B, found in Escherichia coli O157:H7.